The chain runs to 133 residues: Small ribosomal subunit protein uS11 (133 aa).

This sequence belongs to the universal ribosomal protein uS11 family. As to quaternary structure, part of the 30S ribosomal subunit. Interacts with proteins S7 and S18. Binds to IF-3.

Located on the platform of the 30S subunit, it bridges several disparate RNA helices of the 16S rRNA. Forms part of the Shine-Dalgarno cleft in the 70S ribosome. The chain is Small ribosomal subunit protein uS11 from Bordetella petrii (strain ATCC BAA-461 / DSM 12804 / CCUG 43448).